The chain runs to 604 residues: Lipoma-preferred partner homolog (604 aa).

Disordered stretches follow at residues 31 to 96 (TPSI…LDDV) and 129 to 381 (DLES…AFRP). Residues 32 to 41 (PSISVSTQQT) are compositionally biased toward polar residues. Composition is skewed to low complexity over residues 42-53 (PKKFAPVVAPKP) and 143-161 (GSGT…TPVT). The span at 207-226 (SYTTASTPSRPTFNVQVRTA) shows a compositional bias: polar residues. Over residues 365–377 (SGYPSSGPTSSTP) the composition is skewed to low complexity. LIM zinc-binding domains lie at 406 to 465 (GRCA…INTL), 466 to 526 (EQCS…KFAP), and 527 to 595 (RCSV…RIQA).

The protein belongs to the zyxin/ajuba family.

It is found in the nucleus. The protein localises to the cytoplasm. Its subcellular location is the cell junction. Its function is as follows. May play a structural role at sites of cell adhesion in maintaining cell shape and motility. May be involved in signal transduction from cell adhesion sites to the nucleus. The protein is Lipoma-preferred partner homolog (LPP) of Gallus gallus (Chicken).